The following is a 270-amino-acid chain: PspA protein (270 aa).

The interval 238 to 270 (MRGEALPAGGTTATPRPATETSGGAIAEQPYGQ) is disordered. Over residues 240–258 (GEALPAGGTTATPRPATET) the composition is skewed to low complexity.

This sequence belongs to the PspA/Vipp/IM30 family.

It localises to the cytoplasm. Involved in resistance to stress. Associates with and regulates lipid droplets (LDs) homeostasis under conditions of stress and may regulate non-replicating persistence (NRP). Could be involved in preservation of envelope integrity and tolerance to surface stress. The chain is PspA protein from Mycobacterium tuberculosis (strain ATCC 25177 / H37Ra).